Consider the following 163-residue polypeptide: ADP-ribosylation factor-like protein 2-binding protein (163 aa).

Belongs to the ARL2BP family. Interacts with GTP bound ARL2 and ARL3; the complex ARL2-ARL2BP as well as ARL2BP alone, binds to SLC25A4/ANT1. Interaction with ARL2 may be required for cilia basal body localization. Interacts with STAT3; interaction is enhanced with ARL2. Found in a complex with ARL2BP, ARL2 and SLC25A6. Found in a complex with ARL2, ARL2BP and SLC25A4. Interacts with STAT2, STAT3 and STAT4.

The protein localises to the cytoplasm. The protein resides in the mitochondrion intermembrane space. It localises to the cytoskeleton. Its subcellular location is the microtubule organizing center. It is found in the centrosome. The protein localises to the nucleus. The protein resides in the spindle. It localises to the cilium basal body. In terms of biological role, together with ARL2, plays a role in the nuclear translocation, retention and transcriptional activity of STAT3. May play a role as an effector of ARL2. The chain is ADP-ribosylation factor-like protein 2-binding protein (ARL2BP) from Macaca fascicularis (Crab-eating macaque).